A 701-amino-acid polypeptide reads, in one-letter code: Coiled-coil domain-containing protein 62 (701 aa).

2 coiled-coil regions span residues 61–197 (ETST…LQAR) and 241–342 (TCVV…QFLN). The interval 624-652 (KSAEREEESAALPDRRTSANEKDDFSPTS) is disordered. Basic and acidic residues predominate over residues 636–648 (PDRRTSANEKDDF). 2 consecutive short sequence motifs (LXXLL motif) follow at residues 654–658 (LQRLL) and 670–674 (LSTLL).

In terms of assembly, interacts with ESR1 and ESR2 in the presence of estradiol/E2. The interaction with ESR2 recruits CCDC62 to ER target genes, including cyclin-D1/CCND1 AP-1 promoter. Interacts with GOPC. Highly expressed in testis, not detected in other tissues (at protein level). Expressed at low levels in the epididymis, lung, spleen, bladder, kidney, liver, muscle.

It localises to the cytoplasm. It is found in the nucleus. The protein localises to the cytoplasmic vesicle. The protein resides in the secretory vesicle. Its subcellular location is the acrosome. In terms of biological role, nuclear receptor coactivator that can enhance preferentially estrogen receptors ESR1 and ESR2 transactivation. Also modulates progesterone/PGR, glucocorticoid/NR3C1 and androgen/AR receptors transactivation, although at lower level; little effect on vitamin D receptor/VDR. Required for normal spermiogenesis. It probably plays a role in acrosome formation. This is Coiled-coil domain-containing protein 62 (Ccdc62) from Mus musculus (Mouse).